We begin with the raw amino-acid sequence, 1403 residues long: DNA-directed RNA polymerase subunit beta' (1403 aa).

Zn(2+)-binding residues include Cys-70, Cys-72, Cys-85, and Cys-88. The Mg(2+) site is built by Asp-460, Asp-462, and Asp-464. Zn(2+)-binding residues include Cys-814, Cys-888, Cys-895, and Cys-898. The segment at 1369 to 1403 is disordered; it reads RRKRRMLEQPESLTADTGTSHYGEDEISESGAATA. Positions 1379–1388 are enriched in polar residues; that stretch reads ESLTADTGTS.

The protein belongs to the RNA polymerase beta' chain family. In terms of assembly, the RNAP catalytic core consists of 2 alpha, 1 beta, 1 beta' and 1 omega subunit. When a sigma factor is associated with the core the holoenzyme is formed, which can initiate transcription. Mg(2+) serves as cofactor. Requires Zn(2+) as cofactor.

The enzyme catalyses RNA(n) + a ribonucleoside 5'-triphosphate = RNA(n+1) + diphosphate. DNA-dependent RNA polymerase catalyzes the transcription of DNA into RNA using the four ribonucleoside triphosphates as substrates. This chain is DNA-directed RNA polymerase subunit beta', found in Nitrosococcus oceani (strain ATCC 19707 / BCRC 17464 / JCM 30415 / NCIMB 11848 / C-107).